A 90-amino-acid polypeptide reads, in one-letter code: Large ribosomal subunit protein bL27 (90 aa).

Residues 1–24 (MAHKKGTGSTRNGRDSNSKRLGVK) form a disordered region.

Belongs to the bacterial ribosomal protein bL27 family.

The sequence is that of Large ribosomal subunit protein bL27 from Prochlorococcus marinus (strain NATL1A).